The chain runs to 270 residues: Phospholysine phosphohistidine inorganic pyrophosphate phosphatase (270 aa).

D14 and S16 together coordinate Mg(2+). Substrate contacts are provided by residues 14–16, 52–53, and K187; these read DVS and TN. A Mg(2+)-binding site is contributed by D212.

The protein belongs to the HAD-like hydrolase superfamily. The cofactor is Mg(2+).

It is found in the cytoplasm. The protein localises to the nucleus. It catalyses the reaction diphosphate + H2O = 2 phosphate + H(+). In terms of biological role, phosphatase that hydrolyzes imidodiphosphate, 3-phosphohistidine and 6-phospholysine. Has broad substrate specificity and can also hydrolyze inorganic diphosphate, but with lower efficiency. The sequence is that of Phospholysine phosphohistidine inorganic pyrophosphate phosphatase (lhpp) from Xenopus laevis (African clawed frog).